The primary structure comprises 425 residues: Histidine--tRNA ligase (425 aa).

Belongs to the class-II aminoacyl-tRNA synthetase family. In terms of assembly, homodimer.

Its subcellular location is the cytoplasm. The enzyme catalyses tRNA(His) + L-histidine + ATP = L-histidyl-tRNA(His) + AMP + diphosphate + H(+). The sequence is that of Histidine--tRNA ligase from Histophilus somni (strain 2336) (Haemophilus somnus).